A 248-amino-acid polypeptide reads, in one-letter code: Isoprenyl transferase (248 aa).

Aspartate 28 is a catalytic residue. Aspartate 28 lines the Mg(2+) pocket. Substrate-binding positions include 29–32 (GNGR), tryptophan 33, arginine 41, histidine 45, and 73–75 (SSE). The active-site Proton acceptor is the asparagine 76. Residues tryptophan 77, arginine 79, arginine 196, and 202–204 (RLS) each bind substrate. Residue glutamate 215 coordinates Mg(2+).

It belongs to the UPP synthase family. As to quaternary structure, homodimer. Requires Mg(2+) as cofactor.

In terms of biological role, catalyzes the condensation of isopentenyl diphosphate (IPP) with allylic pyrophosphates generating different type of terpenoids. The polypeptide is Isoprenyl transferase (Zymomonas mobilis subsp. mobilis (strain ATCC 31821 / ZM4 / CP4)).